The chain runs to 407 residues: 4-hydroxybenzoate polyprenyltransferase, mitochondrial (407 aa).

The N-terminal 20 residues, 1–20 (MAFFGLSRVSRRLLKSSVSV), are a transit peptide targeting the mitochondrion. 6 helical membrane-spanning segments follow: residues 137-157 (IGTW…ADPG), 162-182 (FKYM…GCTI), 210-230 (FQGI…LLQL), 254-274 (FTFW…LLGW), 279-299 (GSIA…WTLV), and 330-350 (LWLT…GFSA).

The protein belongs to the UbiA prenyltransferase family. Mg(2+) serves as cofactor. In terms of tissue distribution, expressed in flowers.

It is found in the mitochondrion inner membrane. It catalyses the reaction an all-trans-polyprenyl diphosphate + 4-hydroxybenzoate = a 4-hydroxy-3-(all-trans-polyprenyl)benzoate + diphosphate. The protein operates within cofactor biosynthesis; ubiquinone biosynthesis. In terms of biological role, catalyzes the prenylation of para-hydroxybenzoate (PHB) with an all-trans polyprenyl group. Mediates the second step in the final reaction sequence of coenzyme Q (CoQ) biosynthesis, which is the condensation of the polyisoprenoid side chain with PHB, generating the first membrane-bound Q intermediate. Required for embryo development. The chain is 4-hydroxybenzoate polyprenyltransferase, mitochondrial from Arabidopsis thaliana (Mouse-ear cress).